Consider the following 101-residue polypeptide: MAKKSAVARENKRRKLVEANYKKRSELRKIAKSLTASEEEKENARVALNKMKRDTAPIRLHNRCLLTGRPRGYLRKFAISRICFRQMASMGEIPGVVKASW.

The protein belongs to the universal ribosomal protein uS14 family. In terms of assembly, part of the 30S ribosomal subunit. Contacts proteins S3 and S10.

In terms of biological role, binds 16S rRNA, required for the assembly of 30S particles and may also be responsible for determining the conformation of the 16S rRNA at the A site. This Chlamydia abortus (strain DSM 27085 / S26/3) (Chlamydophila abortus) protein is Small ribosomal subunit protein uS14.